Reading from the N-terminus, the 183-residue chain is Crossover junction endodeoxyribonuclease RuvC (183 aa).

Active-site residues include Asp-16, Glu-75, and Asp-147. Asp-16, Glu-75, and Asp-147 together coordinate Mg(2+).

The protein belongs to the RuvC family. In terms of assembly, homodimer which binds Holliday junction (HJ) DNA. The HJ becomes 2-fold symmetrical on binding to RuvC with unstacked arms; it has a different conformation from HJ DNA in complex with RuvA. In the full resolvosome a probable DNA-RuvA(4)-RuvB(12)-RuvC(2) complex forms which resolves the HJ. Mg(2+) is required as a cofactor.

Its subcellular location is the cytoplasm. It catalyses the reaction Endonucleolytic cleavage at a junction such as a reciprocal single-stranded crossover between two homologous DNA duplexes (Holliday junction).. In terms of biological role, the RuvA-RuvB-RuvC complex processes Holliday junction (HJ) DNA during genetic recombination and DNA repair. Endonuclease that resolves HJ intermediates. Cleaves cruciform DNA by making single-stranded nicks across the HJ at symmetrical positions within the homologous arms, yielding a 5'-phosphate and a 3'-hydroxyl group; requires a central core of homology in the junction. The consensus cleavage sequence is 5'-(A/T)TT(C/G)-3'. Cleavage occurs on the 3'-side of the TT dinucleotide at the point of strand exchange. HJ branch migration catalyzed by RuvA-RuvB allows RuvC to scan DNA until it finds its consensus sequence, where it cleaves and resolves the cruciform DNA. The polypeptide is Crossover junction endodeoxyribonuclease RuvC (Azoarcus sp. (strain BH72)).